A 396-amino-acid polypeptide reads, in one-letter code: Tryptophan synthase beta chain (396 aa).

K86 is modified (N6-(pyridoxal phosphate)lysine).

It belongs to the TrpB family. In terms of assembly, tetramer of two alpha and two beta chains. Requires pyridoxal 5'-phosphate as cofactor.

The catalysed reaction is (1S,2R)-1-C-(indol-3-yl)glycerol 3-phosphate + L-serine = D-glyceraldehyde 3-phosphate + L-tryptophan + H2O. The protein operates within amino-acid biosynthesis; L-tryptophan biosynthesis; L-tryptophan from chorismate: step 5/5. The beta subunit is responsible for the synthesis of L-tryptophan from indole and L-serine. This chain is Tryptophan synthase beta chain, found in Aliivibrio fischeri (strain ATCC 700601 / ES114) (Vibrio fischeri).